Here is a 178-residue protein sequence, read N- to C-terminus: FMN reductase (NADH) RutF (178 aa).

This sequence belongs to the non-flavoprotein flavin reductase family. RutF subfamily.

The catalysed reaction is FMNH2 + NAD(+) = FMN + NADH + 2 H(+). Functionally, catalyzes the reduction of FMN to FMNH2 which is used to reduce pyrimidine by RutA via the Rut pathway. This Pseudomonas syringae pv. syringae (strain B728a) protein is FMN reductase (NADH) RutF.